A 59-amino-acid chain; its full sequence is Large ribosomal subunit protein bL32c (59 aa).

Basic residues predominate over residues 1-19 (MAVPKKRTSKAKKNARKAN). A disordered region spans residues 1 to 24 (MAVPKKRTSKAKKNARKANWKNQA).

The protein belongs to the bacterial ribosomal protein bL32 family.

The protein localises to the plastid. The protein resides in the chloroplast. This Porphyra purpurea (Red seaweed) protein is Large ribosomal subunit protein bL32c (rpl32).